A 153-amino-acid polypeptide reads, in one-letter code: Myosin regulatory light chain, smooth muscle (153 aa).

3 consecutive EF-hand domains span residues 12 to 47, 81 to 116, and 117 to 152; these read SQIQ…LGRG, DPEE…QADR, and FSQS…GQEE. Residues D25, N27, D29, and D36 each contribute to the Ca(2+) site.

Its function is as follows. In molluscan muscle, calcium regulation is associated with myosin rather than with actin. Muscle myosin contains two types of light chains: the catalytic light chain, essential for ATPase activity, and the regulatory light chain, a calcium-binding protein responsible for Ca(2+) dependent binding and Ca(2+) dependent Mg-ATPase activity. In Halocynthia roretzi (Sea squirt), this protein is Myosin regulatory light chain, smooth muscle.